Consider the following 181-residue polypeptide: Adenine phosphoribosyltransferase (181 aa).

It belongs to the purine/pyrimidine phosphoribosyltransferase family. In terms of assembly, homodimer.

The protein resides in the cytoplasm. It carries out the reaction AMP + diphosphate = 5-phospho-alpha-D-ribose 1-diphosphate + adenine. It participates in purine metabolism; AMP biosynthesis via salvage pathway; AMP from adenine: step 1/1. Catalyzes a salvage reaction resulting in the formation of AMP, that is energically less costly than de novo synthesis. The chain is Adenine phosphoribosyltransferase from Pseudoalteromonas translucida (strain TAC 125).